A 420-amino-acid polypeptide reads, in one-letter code: Hemojuvelin (420 aa).

An N-terminal signal peptide occupies residues 1-32 (MGQSPSPRSPHGSPPTLSTLTLLLLLCGQAHS). Residue Tyr43 is modified to Phosphotyrosine. Residue Asn111 is glycosylated (N-linked (GlcNAc...) asparagine). Residues 113–135 (SRQGPTAPPPARGPALPGAGPAP) form a disordered region. Positions 125 to 134 (GPALPGAGPA) are enriched in low complexity. 2 disulfide bridges follow: Cys141–Cys223 and Cys160–Cys310. Residues Asn206 and Asn365 are each glycosylated (N-linked (GlcNAc...) asparagine). Asp393 is lipidated: GPI-anchor amidated aspartate. Positions 394 to 420 (AGPPLSPAICLVPLLSALFVLWLCFSK) are cleaved as a propeptide — removed in mature form.

The protein belongs to the repulsive guidance molecule (RGM) family. In terms of assembly, interacts with BMP2 and BMP4. Interacts with BMP6. Interacts with BMPR1B. Interacts with TMPRSS6. Post-translationally, autocatalytically cleaved at low pH; the two chains remain linked via two disulfide bonds. Also proteolytically processed by TMPRSS6, several fragments being released in the extracellular space; regulates HJV activity in BMP signaling and thefore iron homeostasis. Muscle cell lineage.

The protein resides in the cell membrane. In terms of biological role, acts as a bone morphogenetic protein (BMP) coreceptor. Through enhancement of BMP signaling regulates hepcidin (HAMP) expression and regulates iron homeostasis. In Mus musculus (Mouse), this protein is Hemojuvelin.